The sequence spans 598 residues: Beta-fructofuranosidase, insoluble isoenzyme 2 (598 aa).

An N-terminal signal peptide occupies residues 1–25 (MGVLGSRVAWAWLVQLLLLQQLAGA). Asp-69 is an active-site residue. N-linked (GlcNAc...) asparagine glycosylation is found at Asn-164, Asn-189, and Asn-348.

Belongs to the glycosyl hydrolase 32 family.

The protein resides in the secreted. The protein localises to the extracellular space. It is found in the apoplast. It localises to the cell wall. It catalyses the reaction Hydrolysis of terminal non-reducing beta-D-fructofuranoside residues in beta-D-fructofuranosides.. In terms of biological role, may play a role in sucrose partitioning during seed development. This is Beta-fructofuranosidase, insoluble isoenzyme 2 (CIN2) from Oryza sativa subsp. indica (Rice).